The primary structure comprises 63 residues: Cecropin-B (63 aa).

Positions 1–23 are cleaved as a signal peptide; sequence MNFNKIFVFVALILAISLGNSEA. Arg62 carries the arginine amide modification.

The protein belongs to the cecropin family. In terms of tissue distribution, strongly expressed in larval, pupal and adult fat body and hemocytes after injection of bacteria. Maximal expression is seen in pupae.

The protein resides in the secreted. In terms of biological role, cecropins have lytic and antibacterial activity against several Gram-positive and Gram-negative bacteria. The sequence is that of Cecropin-B (CecB) from Drosophila melanogaster (Fruit fly).